The sequence spans 379 residues: Cytochrome b (379 aa).

Transmembrane regions (helical) follow at residues phenylalanine 33–methionine 53, tryptophan 77–valine 98, tryptophan 113–leucine 133, and phenylalanine 178–leucine 198. The heme b site is built by histidine 83 and histidine 97. Heme b contacts are provided by histidine 182 and histidine 196. Histidine 201 is a binding site for a ubiquinone. 4 helical membrane passes run isoleucine 226–phenylalanine 246, leucine 288–asparagine 308, isoleucine 320–glycine 340, and phenylalanine 347–proline 367.

The protein belongs to the cytochrome b family. The cytochrome bc1 complex contains 11 subunits: 3 respiratory subunits (MT-CYB, CYC1 and UQCRFS1), 2 core proteins (UQCRC1 and UQCRC2) and 6 low-molecular weight proteins (UQCRH/QCR6, UQCRB/QCR7, UQCRQ/QCR8, UQCR10/QCR9, UQCR11/QCR10 and a cleavage product of UQCRFS1). This cytochrome bc1 complex then forms a dimer. Heme b serves as cofactor.

The protein resides in the mitochondrion inner membrane. Functionally, component of the ubiquinol-cytochrome c reductase complex (complex III or cytochrome b-c1 complex) that is part of the mitochondrial respiratory chain. The b-c1 complex mediates electron transfer from ubiquinol to cytochrome c. Contributes to the generation of a proton gradient across the mitochondrial membrane that is then used for ATP synthesis. This chain is Cytochrome b (MT-CYB), found in Necromys amoenus (Pleasant bolo mouse).